A 272-amino-acid chain; its full sequence is MKQYLRSSVLVIGGAEDKVHGKEILQRFWHCAGGTDAIIAIIPSASREPTIIGDRYVSIFSEMGAKDLKVLDVRDRIQGEDKDYQEYVEKCTAIFMTGGDQLRLCGLLADTPLMERIRQRVKLGEVTLGGTSAGAAVMGHHMIAGGSSGESPNRALVDMAMGLGIIPEVIVDQHFHNRNRMARLLSALSNHPERLGIGIDEDTCAVFQKDEYIEVIGKGTVTIVDGQAMSYTNHGKVAAEDPLALHNLRLHILGHGDRYNRKTHQPMAGIVE.

Catalysis depends on charge relay system residues S132, E150, and H174.

The protein belongs to the peptidase S51 family.

It catalyses the reaction [L-4-(L-arginin-2-N-yl)aspartate](n) + H2O = [L-4-(L-arginin-2-N-yl)aspartate](n-1) + L-4-(L-arginin-2-N-yl)aspartate. Exopeptidase that catalyzes the hydrolytic cleavage of multi-L-arginyl-poly-L-aspartic acid (cyanophycin; a water-insoluble reserve polymer) into aspartate-arginine dipeptides. In Geminocystis herdmanii (strain PCC 6308) (Synechocystis sp. (strain PCC 6308)), this protein is Cyanophycinase (cphB).